The sequence spans 94 residues: MINVRVINKKRRIQKYKVSVKSGDTIKVISGKYKNIVAKVLRVLKYSNEIIVKGVNIKIKHIKPVRDNEMGSLKSLEFPINISKVVLLESRKKE.

The protein belongs to the universal ribosomal protein uL24 family. As to quaternary structure, part of the 50S ribosomal subunit.

It is found in the plastid. The protein resides in the chloroplast. Functionally, one of two assembly initiator proteins, it binds directly to the 5'-end of the 23S rRNA, where it nucleates assembly of the 50S subunit. This chain is Large ribosomal subunit protein uL24c (rpl24), found in Cyanidium caldarium (Red alga).